The primary structure comprises 417 residues: Membrane protein UL43 (417 aa).

Positions 1-21 (MLRNDSHRAVSPEDGQGRVDD) are disordered. 5 consecutive transmembrane segments (helical) span residues 57 to 77 (GPYA…LGFM), 90 to 110 (IYAW…SLGE), 119 to 139 (APGP…LLVL), 146 to 166 (LFLL…VGGL), and 175 to 195 (WWIG…GPGA). The segment at 217–254 (AGESLSRRPPEDPERPGVPGPPSPPTPQRSHGPPADEV) is disordered. Basic and acidic residues predominate over residues 221-231 (LSRRPPEDPER). Residues 232–243 (PGVPGPPSPPTP) are compositionally biased toward pro residues. Helical transmembrane passes span 263-283 (ENVW…VKTV), 291-311 (PGPG…AVAL), 323-343 (LTDP…GLVF), 348-368 (VVVY…VLGL), and 389-409 (GLFF…CPPG).

It belongs to the alphaherpesvirinae HHV-1 UL43 family.

It localises to the membrane. This is Membrane protein UL43 from Human herpesvirus 1 (strain 17) (HHV-1).